Here is a 337-residue protein sequence, read N- to C-terminus: Diacylglycerol O-acyltransferase 2-like protein 6 (337 aa).

2 consecutive transmembrane segments (helical) span residues 22 to 42 and 102 to 122; these read MPVY…FLVF and YIIA…NFAT.

Belongs to the diacylglycerol acyltransferase family.

The protein localises to the endoplasmic reticulum membrane. The enzyme catalyses 1,2-di-(9Z-octadecenoyl)-sn-glycerol + (9Z)-octadecenoyl-CoA = 1,2,3-tri-(9Z-octadecenoyl)-glycerol + CoA. Diglyceride acyltransferase that uses fatty acyl-CoA as substrate. Particularly active with oleate as a substrate. Has no wax synthase activity to produce wax esters. This Bos taurus (Bovine) protein is Diacylglycerol O-acyltransferase 2-like protein 6 (DGAT2L6).